Here is a 350-residue protein sequence, read N- to C-terminus: Serine-threonine kinase receptor-associated protein (350 aa).

7 WD repeats span residues 12-56 (GHTR…GTFL), 57-96 (GHKG…ELMT), 98-137 (AHKH…AEPK), 141-179 (GHTS…EVKS), 180-212 (LNFN…HSAV), 221-262 (EAPA…ESYK), and 263-302 (GHFG…TYGL). Residues serine 312, serine 335, and serine 338 each carry the phosphoserine modification. Positions 326–350 (AEEELEEIASENSDSIYSSTPEVKA) are disordered. Residues 337 to 350 (NSDSIYSSTPEVKA) show a composition bias toward polar residues. Tyrosine 342 is modified (phosphotyrosine).

Belongs to the WD repeat STRAP family. In terms of assembly, part of the core SMN complex that contains SMN1, GEMIN2/SIP1, DDX20/GEMIN3, GEMIN4, GEMIN5, GEMIN6, GEMIN7, GEMIN8 and STRAP/UNRIP. Part of the SMN-Sm complex that contains SMN1, GEMIN2/SIP1, DDX20/GEMIN3, GEMIN4, GEMIN5, GEMIN6, GEMIN7, GEMIN8, STRAP/UNRIP and the Sm proteins SNRPB, SNRPD1, SNRPD2, SNRPD3, SNRPE, SNRPF and SNRPG. Interacts directly with GEMIN6 and GEMIN7. Associates with the SMN complex in the cytoplasm but not in the nucleus. Also interacts with CSDE1/UNR and MAWBP. Interacts with PDPK1. Interacts with TRIM48.

It localises to the cytoplasm. Its subcellular location is the nucleus. Its function is as follows. The SMN complex catalyzes the assembly of small nuclear ribonucleoproteins (snRNPs), the building blocks of the spliceosome, and thereby plays an important role in the splicing of cellular pre-mRNAs. Most spliceosomal snRNPs contain a common set of Sm proteins SNRPB, SNRPD1, SNRPD2, SNRPD3, SNRPE, SNRPF and SNRPG that assemble in a heptameric protein ring on the Sm site of the small nuclear RNA to form the core snRNP (Sm core). In the cytosol, the Sm proteins SNRPD1, SNRPD2, SNRPE, SNRPF and SNRPG are trapped in an inactive 6S pICln-Sm complex by the chaperone CLNS1A that controls the assembly of the core snRNP. To assemble core snRNPs, the SMN complex accepts the trapped 5Sm proteins from CLNS1A forming an intermediate. Binding of snRNA inside 5Sm triggers eviction of the SMN complex, thereby allowing binding of SNRPD3 and SNRPB to complete assembly of the core snRNP. STRAP plays a role in the cellular distribution of the SMN complex. Negatively regulates TGF-beta signaling but positively regulates the PDPK1 kinase activity by enhancing its autophosphorylation and by significantly reducing the association of PDPK1 with 14-3-3 protein. This Mus musculus (Mouse) protein is Serine-threonine kinase receptor-associated protein (Strap).